We begin with the raw amino-acid sequence, 179 residues long: DELTA-actitoxin-Afr1a (179 aa).

An N-terminal alpha-helix that contributes to the pore region spans residues 1 to 29; that stretch reads SADVAGAVIDGAGLGFDVLKTVLEALGNV. Arg-31 contacts an N-(acyl)-sphingosylphosphocholine. Residues Tyr-51 and Arg-53 each contribute to the N-acetyl-D-glucosamine 6-sulfate site. Positions 53, 54, 79, 85, 108, 113, 114, 116, 133, 137, 138, 144, and 168 each coordinate an N-(acyl)-sphingosylphosphocholine. The interval 105–120 is trp-rich region, which is important for the binding to lipid membrane; that stretch reads SVPYDYNWYSNWWNVR. Residue Tyr-138 coordinates N-acetyl-D-glucosamine 6-sulfate. A Cell attachment site, crucial for protein stability motif is present at residues 144–146; the sequence is RGD.

This sequence belongs to the actinoporin family. Sea anemone subfamily. As to quaternary structure, octamer or nonamer in membranes. Monomer in the soluble state.

It is found in the secreted. It localises to the nematocyst. The protein resides in the target cell membrane. In terms of biological role, pore-forming toxin (PFT) that consists of a crown-shaped octamer or nonamer that forms cation-selective hydrophilic pores of about 1.5 nm (inside) and 13 nm (outside). It causes cardiac stimulation and cytolysis (EC(50)=1.6 nM on erythrocytes). Interestingly, the Phe-16 is crucial for hemolysis. Pore formation is a multi-step process that involves specific recognition of membrane sphingomyelin (but neither cholesterol nor phosphatidylcholine) using aromatic rich region and adjacent phosphocholine (POC) binding site, firm binding to the membrane (mainly driven by hydrophobic interactions) accompanied by the transfer of the N-terminal region to the lipid-water interface and finally pore formation after oligomerization of monomers. It is probable that a dimeric form is an assembly intermediate before the complete oligomerization. The formation of stable pores occurs only in vesicles composed of DOPC/SM (there is no oligomerization when the PFT is treated with vesicles of DOPC or SM alone). The transmembrane pore displays 8 lateral perforations, one at each subunit-subunit interface, partially occupied by the acyl-chain region of a bridging lipid. Each pore contains 24 lipid molecules, firmly bound to each subunit, that is, 3 lipids (L1, L2, L3, L4 and/or L5) are associated to each subunit. Lipid L1 bridges 2 subunits, whereas lipids L2 and L3 bind to sites at single subunit. This chain is DELTA-actitoxin-Afr1a, found in Actinia fragacea (Strawberry anemone).